Consider the following 383-residue polypeptide: Glucose-1-phosphate adenylyltransferase (383 aa).

Residues tyrosine 100, glycine 165, 180–181, and serine 191 each bind alpha-D-glucose 1-phosphate; that span reads EK.

The protein belongs to the bacterial/plant glucose-1-phosphate adenylyltransferase family. Homotetramer.

The catalysed reaction is alpha-D-glucose 1-phosphate + ATP + H(+) = ADP-alpha-D-glucose + diphosphate. The protein operates within glycan biosynthesis; glycogen biosynthesis. Functionally, involved in the biosynthesis of ADP-glucose, a building block required for the elongation reactions to produce glycogen. Catalyzes the reaction between ATP and alpha-D-glucose 1-phosphate (G1P) to produce pyrophosphate and ADP-Glc. This chain is Glucose-1-phosphate adenylyltransferase, found in Clostridium kluyveri (strain ATCC 8527 / DSM 555 / NBRC 12016 / NCIMB 10680 / K1).